Reading from the N-terminus, the 466-residue chain is 23S rRNA (uracil(1939)-C(5))-methyltransferase RlmD (466 aa).

Positions Met-1 to Glu-54 constitute a TRAM domain. Positions 67, 73, 76, and 155 each coordinate [4Fe-4S] cluster. Residues Gln-264, Phe-293, Asn-298, Glu-314, Asn-342, and Asp-363 each contribute to the S-adenosyl-L-methionine site. The active-site Nucleophile is the Cys-393.

It belongs to the class I-like SAM-binding methyltransferase superfamily. RNA M5U methyltransferase family. RlmD subfamily.

It carries out the reaction uridine(1939) in 23S rRNA + S-adenosyl-L-methionine = 5-methyluridine(1939) in 23S rRNA + S-adenosyl-L-homocysteine + H(+). Its function is as follows. Catalyzes the formation of 5-methyl-uridine at position 1939 (m5U1939) in 23S rRNA. This is 23S rRNA (uracil(1939)-C(5))-methyltransferase RlmD from Bordetella bronchiseptica (strain ATCC BAA-588 / NCTC 13252 / RB50) (Alcaligenes bronchisepticus).